The primary structure comprises 152 residues: Ribosome maturation factor RimP (152 aa).

Belongs to the RimP family.

The protein localises to the cytoplasm. Its function is as follows. Required for maturation of 30S ribosomal subunits. The protein is Ribosome maturation factor RimP of Escherichia coli (strain K12 / MC4100 / BW2952).